A 550-amino-acid chain; its full sequence is Hydroxylamine reductase (550 aa).

[2Fe-2S] cluster contacts are provided by cysteine 3, cysteine 6, cysteine 18, and cysteine 25. Hybrid [4Fe-2O-2S] cluster-binding residues include histidine 249, glutamate 273, cysteine 317, cysteine 405, cysteine 433, cysteine 458, glutamate 492, and lysine 494. Residue cysteine 405 is modified to Cysteine persulfide.

This sequence belongs to the HCP family. Requires [2Fe-2S] cluster as cofactor. Hybrid [4Fe-2O-2S] cluster is required as a cofactor.

Its subcellular location is the cytoplasm. The enzyme catalyses A + NH4(+) + H2O = hydroxylamine + AH2 + H(+). In terms of biological role, catalyzes the reduction of hydroxylamine to form NH(3) and H(2)O. The chain is Hydroxylamine reductase from Salmonella typhi.